The primary structure comprises 121 residues: Group 1 truncated hemoglobin (121 aa).

M1 is modified (N-acetylmethionine). A heme-binding site is contributed by H73.

The protein belongs to the truncated hemoglobin family. Group I subfamily. In terms of assembly, monomer. Heme is required as a cofactor.

This chain is Group 1 truncated hemoglobin, found in Tetrahymena thermophila.